We begin with the raw amino-acid sequence, 142 residues long: Lysozyme X (142 aa).

The N-terminal stretch at M1–G19 is a signal peptide. The C-type lysozyme domain maps to R20–V142. Disulfide bonds link C25–C140, C46–C130, C81–C97, and C93–C111. Active-site residues include E51 and D69.

Belongs to the glycosyl hydrolase 22 family. Found in the midgut.

The catalysed reaction is Hydrolysis of (1-&gt;4)-beta-linkages between N-acetylmuramic acid and N-acetyl-D-glucosamine residues in a peptidoglycan and between N-acetyl-D-glucosamine residues in chitodextrins.. In terms of biological role, unlikely to play an active role in the humoral immune defense. May have a function in the digestion of bacteria in the food. May be involved in the clearance of bacteria from the larval gut before metamorphosis. The sequence is that of Lysozyme X (LysX) from Drosophila melanogaster (Fruit fly).